The sequence spans 490 residues: Glutamyl-tRNA(Gln) amidotransferase subunit A (490 aa).

Active-site charge relay system residues include Lys-78 and Ser-153. The Acyl-ester intermediate role is filled by Ser-177.

Belongs to the amidase family. GatA subfamily. In terms of assembly, heterotrimer of A, B and C subunits.

It carries out the reaction L-glutamyl-tRNA(Gln) + L-glutamine + ATP + H2O = L-glutaminyl-tRNA(Gln) + L-glutamate + ADP + phosphate + H(+). In terms of biological role, allows the formation of correctly charged Gln-tRNA(Gln) through the transamidation of misacylated Glu-tRNA(Gln) in organisms which lack glutaminyl-tRNA synthetase. The reaction takes place in the presence of glutamine and ATP through an activated gamma-phospho-Glu-tRNA(Gln). The sequence is that of Glutamyl-tRNA(Gln) amidotransferase subunit A from Bdellovibrio bacteriovorus (strain ATCC 15356 / DSM 50701 / NCIMB 9529 / HD100).